The chain runs to 137 residues: Prefoldin subunit alpha (137 aa).

The protein belongs to the prefoldin subunit alpha family. In terms of assembly, heterohexamer of two alpha and four beta subunits.

The protein resides in the cytoplasm. In terms of biological role, molecular chaperone capable of stabilizing a range of proteins. Seems to fulfill an ATP-independent, HSP70-like function in archaeal de novo protein folding. The sequence is that of Prefoldin subunit alpha (pfdA) from Archaeoglobus fulgidus (strain ATCC 49558 / DSM 4304 / JCM 9628 / NBRC 100126 / VC-16).